The following is a 264-amino-acid chain: ATP synthase subunit a (264 aa).

Helical transmembrane passes span 29 to 49 (TWHIDSLLFSVGLGVLFLWIF), 87 to 107 (NALIAPLALTIFVWVFMMNFM), 134 to 154 (DLNITFSLALGVFLLIIYYSI), 177 to 197 (IPVNLLLESVTLIAKPISLAL), 208 to 228 (LIFILIALMYGANWLIASLGV), and 235 to 255 (LIFHILVITLQAFIFMMLTIV).

The protein belongs to the ATPase A chain family. In terms of assembly, F-type ATPases have 2 components, CF(1) - the catalytic core - and CF(0) - the membrane proton channel. CF(1) has five subunits: alpha(3), beta(3), gamma(1), delta(1), epsilon(1). CF(0) has three main subunits: a(1), b(2) and c(9-12). The alpha and beta chains form an alternating ring which encloses part of the gamma chain. CF(1) is attached to CF(0) by a central stalk formed by the gamma and epsilon chains, while a peripheral stalk is formed by the delta and b chains.

Its subcellular location is the cell inner membrane. Its function is as follows. Key component of the proton channel; it plays a direct role in the translocation of protons across the membrane. This chain is ATP synthase subunit a, found in Shewanella amazonensis (strain ATCC BAA-1098 / SB2B).